A 378-amino-acid chain; its full sequence is Putative aminoglycoside phosphotransferase (378 aa).

Residues arginine 79 and 134–136 (DYV) each bind ATP. The active-site Proton acceptor is the aspartate 249. Mg(2+)-binding residues include asparagine 254, aspartate 267, and glutamate 269.

This sequence belongs to the aminoglycoside phosphotransferase family.

In terms of biological role, might catalyze the phosphorylation of aminoglycosides and confer aminoglycoside antibiotics resistance. This is Putative aminoglycoside phosphotransferase from Mycobacterium tuberculosis (strain CDC 1551 / Oshkosh).